Here is a 460-residue protein sequence, read N- to C-terminus: MFS-type transporter PUL3 (460 aa).

A run of 8 helical transmembrane segments spans residues 16–36 (AVTL…SSVV), 50–70 (YLFI…FIIG), 81–101 (WVII…SCAG), 113–133 (IICG…TAIS), 151–171 (GICM…DFTV), 181–201 (APTF…MFVL), 240–260 (MFLS…FLTL), and 271–291 (VAFM…PDLV). A disordered region spans residues 300–323 (PSTQDETDTSDNDKIEKEESEQKS). Residues 310 to 323 (DNDKIEKEESEQKS) are compositionally biased toward basic and acidic residues. A run of 4 helical transmembrane segments spans residues 333 to 353 (VSLT…MIGA), 369 to 389 (IFFT…GSSV), 408 to 428 (FIGA…AALY), and 433 to 453 (GLPI…PSLV).

The protein belongs to the major facilitator superfamily. TCR/Tet family.

It localises to the cell membrane. Functionally, MFS-type transporer required for the uptake of iron via the uptake of the siderophore pulcherrimin-iron complex. In Kluyveromyces lactis (strain ATCC 8585 / CBS 2359 / DSM 70799 / NBRC 1267 / NRRL Y-1140 / WM37) (Yeast), this protein is MFS-type transporter PUL3.